We begin with the raw amino-acid sequence, 432 residues long: Alcohol acyltransferase 9 (432 aa).

Catalysis depends on proton acceptor residues H156 and D379.

This sequence belongs to the plant acyltransferase family. Expressed in fruit.

The enzyme catalyses 2-(methylsulfanyl)acetyl-CoA + butan-1-ol = butyl 2-(methylsulfanyl)acetate + CoA. It carries out the reaction ethanol + acetyl-CoA = ethyl acetate + CoA. It catalyses the reaction butan-1-ol + acetyl-CoA = butyl acetate + CoA. The catalysed reaction is butan-1-ol + propanoyl-CoA = butyl propanoate + CoA. Involved in the biosynthesis of volatile esters which confer kiwifruit flavor. Alcohol acyl transferase that can use a wide range of alcohols as substrate to produce esters. Exhibits acetyl-CoA:alcohol O-acyltransferase activity. This Actinidia eriantha (Velvet vine) protein is Alcohol acyltransferase 9.